The primary structure comprises 283 residues: Pantothenate synthetase (283 aa).

Residue 30 to 37 (MGALHEGH) participates in ATP binding. Catalysis depends on His-37, which acts as the Proton donor. Residue Gln-61 coordinates (R)-pantoate. Gln-61 is a beta-alanine binding site. 147-150 (GEKD) is an ATP binding site. Gln-153 lines the (R)-pantoate pocket. Residues Ile-176 and 184-187 (VSSR) contribute to the ATP site.

The protein belongs to the pantothenate synthetase family. In terms of assembly, homodimer.

Its subcellular location is the cytoplasm. It catalyses the reaction (R)-pantoate + beta-alanine + ATP = (R)-pantothenate + AMP + diphosphate + H(+). The protein operates within cofactor biosynthesis; (R)-pantothenate biosynthesis; (R)-pantothenate from (R)-pantoate and beta-alanine: step 1/1. In terms of biological role, catalyzes the condensation of pantoate with beta-alanine in an ATP-dependent reaction via a pantoyl-adenylate intermediate. The sequence is that of Pantothenate synthetase from Pelodictyon phaeoclathratiforme (strain DSM 5477 / BU-1).